A 298-amino-acid polypeptide reads, in one-letter code: Probable alpha-L-glutamate ligase 2 (298 aa).

In terms of domain architecture, ATP-grasp spans 104–287; that stretch reads MQLLSRQGIG…VADAIICFME (184 aa). ATP contacts are provided by residues lysine 141, 178–179, aspartate 187, and 211–213; these read EY and RSN. Aspartate 248, glutamate 260, and asparagine 262 together coordinate Mg(2+). Mn(2+) contacts are provided by aspartate 248, glutamate 260, and asparagine 262.

The protein belongs to the RimK family. Requires Mg(2+) as cofactor. It depends on Mn(2+) as a cofactor.

This chain is Probable alpha-L-glutamate ligase 2, found in Shewanella frigidimarina (strain NCIMB 400).